A 173-amino-acid polypeptide reads, in one-letter code: ATP synthase subunit b (173 aa).

Residues 18 to 38 (IFWSLVILIIVAVFFYKFFLP) traverse the membrane as a helical segment.

The protein belongs to the ATPase B chain family. In terms of assembly, F-type ATPases have 2 components, F(1) - the catalytic core - and F(0) - the membrane proton channel. F(1) has five subunits: alpha(3), beta(3), gamma(1), delta(1), epsilon(1). F(0) has three main subunits: a(1), b(2) and c(10-14). The alpha and beta chains form an alternating ring which encloses part of the gamma chain. F(1) is attached to F(0) by a central stalk formed by the gamma and epsilon chains, while a peripheral stalk is formed by the delta and b chains.

The protein resides in the cell membrane. Its function is as follows. F(1)F(0) ATP synthase produces ATP from ADP in the presence of a proton or sodium gradient. F-type ATPases consist of two structural domains, F(1) containing the extramembraneous catalytic core and F(0) containing the membrane proton channel, linked together by a central stalk and a peripheral stalk. During catalysis, ATP synthesis in the catalytic domain of F(1) is coupled via a rotary mechanism of the central stalk subunits to proton translocation. Component of the F(0) channel, it forms part of the peripheral stalk, linking F(1) to F(0). In Bifidobacterium adolescentis (strain ATCC 15703 / DSM 20083 / NCTC 11814 / E194a), this protein is ATP synthase subunit b.